Consider the following 432-residue polypeptide: Casein kinase II subunit alpha-4, chloroplastic (432 aa).

The transit peptide at 1 to 55 directs the protein to the chloroplast; it reads MALRPCTGFTISSLRNASAANNNLFSLLSFSSSSPAKRNLLLSSLQDNLRRFASS. Positions 63 to 83 are disordered; that stretch reads LRNQQQQHQQQQQSRVKEKSE. Positions 66 to 75 are enriched in low complexity; the sequence is QQQQHQQQQQ. The Protein kinase domain maps to 132 to 417; that stretch reads YEVVRKVGRG…AKEAMAHPYF (286 aa). ATP is bound by residues 138 to 146 and Lys161; that span reads VGRGKYSEV. Asp249 serves as the catalytic Proton acceptor.

This sequence belongs to the protein kinase superfamily. Ser/Thr protein kinase family. CK2 subfamily. Tetramer of two alpha and two beta chains. In terms of tissue distribution, expressed in root tips, lateral root primordia, cotyledons, leaf primordia, sepals, filaments, stigma, and anthers.

Its subcellular location is the plastid. The protein resides in the chloroplast. The catalysed reaction is L-seryl-[protein] + ATP = O-phospho-L-seryl-[protein] + ADP + H(+). It carries out the reaction L-threonyl-[protein] + ATP = O-phospho-L-threonyl-[protein] + ADP + H(+). In terms of biological role, casein kinases are operationally defined by their preferential utilization of acidic proteins such as caseins as substrates. The alpha chain contains the catalytic site. Involved in the regulation of various developmental processes. Involved in the regulation of plant growth and flowering time. Involved in retrograde signaling in plant responses to abscisic acid (ABA) and heat stress. May act as an enhancing factor in abiotic stress signaling through modulation of the expression of some molecular players in retrograde signaling. Phosphorylates RuBisCo activase (RCA) at Thr-78. The sequence is that of Casein kinase II subunit alpha-4, chloroplastic from Arabidopsis thaliana (Mouse-ear cress).